The following is a 152-amino-acid chain: MFRGASAINLDAKGRIAIPKRYRERLHVDFNSQLVITVDFDAACLLIYPLEAWKAIEAKLLLLSDTQGPERAMKRLLLGYAHECELDSNGRLLLPPPLRQYANLDKHAMLVGQLNKFELWDEAAWQQQIELSRETIQSDAFANSERLADFSL.

2 consecutive SpoVT-AbrB domains span residues 5-52 and 81-124; these read ASAI…PLEA and AHEC…DEAA.

The protein belongs to the MraZ family. As to quaternary structure, forms oligomers.

It is found in the cytoplasm. The protein resides in the nucleoid. The protein is Transcriptional regulator MraZ of Shewanella loihica (strain ATCC BAA-1088 / PV-4).